A 417-amino-acid polypeptide reads, in one-letter code: Tyrosine--tRNA ligase (417 aa).

Tyrosine 35 is a binding site for L-tyrosine. Positions 40 to 49 (ATAGSLTVGH) match the 'HIGH' region motif. Residues tyrosine 165 and glutamine 169 each contribute to the L-tyrosine site. The 'KMSKS' region signature appears at 229–233 (KFGKS). Lysine 232 provides a ligand contact to ATP. Positions 350–416 (ISLLEALVFT…GKRFNALIIF (67 aa)) constitute an S4 RNA-binding domain.

This sequence belongs to the class-I aminoacyl-tRNA synthetase family. TyrS type 1 subfamily. As to quaternary structure, homodimer.

The protein localises to the cytoplasm. It catalyses the reaction tRNA(Tyr) + L-tyrosine + ATP = L-tyrosyl-tRNA(Tyr) + AMP + diphosphate + H(+). Catalyzes the attachment of tyrosine to tRNA(Tyr) in a two-step reaction: tyrosine is first activated by ATP to form Tyr-AMP and then transferred to the acceptor end of tRNA(Tyr). The chain is Tyrosine--tRNA ligase from Phytoplasma mali (strain AT).